Reading from the N-terminus, the 196-residue chain is Pyroglutamyl-peptidase 1-like protein (196 aa).

Residues Glu65, Cys127, and His146 contribute to the active site.

It belongs to the peptidase C15 family.

The sequence is that of Pyroglutamyl-peptidase 1-like protein (PGPEP1L) from Homo sapiens (Human).